The following is a 934-amino-acid chain: Rab GTPase-activating protein tbc-11 (934 aa).

The PID domain occupies 16–134 (VQYLGCSQLV…SKAETAAKAL (119 aa)). Residues 337–383 (FISLESDSDRKRSKQNLGKSPSRMPTQLLHPTGDDESDCDEPLLSGS) are disordered. The segment covering 351 to 361 (QNLGKSPSRMP) has biased composition (polar residues). Residues 422–612 (GIPDKLRGRV…FILDLFLSQG (191 aa)) form the Rab-GAP TBC domain. Coiled-coil stretches lie at residues 727 to 800 (KIEL…YKKL) and 861 to 895 (LEER…LTHQ).

Functionally, rab GTPase activating protein for the small GTPases rab-6.1 and rab-6.2. Probably acts through rab-6.1 and rab-6.2 to play a role in microRNA-mediated gene silencing in different tissue types. Required for seam cell division and alae formation. In Caenorhabditis elegans, this protein is Rab GTPase-activating protein tbc-11.